The sequence spans 215 residues: Probable transaldolase (215 aa).

Residue lysine 83 is the Schiff-base intermediate with substrate of the active site.

This sequence belongs to the transaldolase family. Type 3B subfamily.

It localises to the cytoplasm. The catalysed reaction is D-sedoheptulose 7-phosphate + D-glyceraldehyde 3-phosphate = D-erythrose 4-phosphate + beta-D-fructose 6-phosphate. Its pathway is carbohydrate degradation; pentose phosphate pathway; D-glyceraldehyde 3-phosphate and beta-D-fructose 6-phosphate from D-ribose 5-phosphate and D-xylulose 5-phosphate (non-oxidative stage): step 2/3. Transaldolase is important for the balance of metabolites in the pentose-phosphate pathway. The sequence is that of Probable transaldolase (tal) from Clostridium acetobutylicum (strain ATCC 824 / DSM 792 / JCM 1419 / IAM 19013 / LMG 5710 / NBRC 13948 / NRRL B-527 / VKM B-1787 / 2291 / W).